A 102-amino-acid polypeptide reads, in one-letter code: Carboxysome shell protein CsoS1C (102 aa).

A BMC domain is found at 8-93 (ALGMIETRGL…PHKEVEPVLA (86 aa)).

This sequence belongs to the bacterial microcompartments protein family. CsoS1 subfamily. Homohexamer with a small central pore.

It is found in the carboxysome. One of shell proteins of the carboxysome, a polyhedral inclusion where RuBisCO (ribulose bisphosphate carboxylase, ccbL-ccbS) is sequestered. Assembles into hexamers which make sheets that form the facets of the polyhedral carboxysome. The shell probably limits the diffusion of CO(2) into and out of the carboxysome. In Hydrogenovibrio crunogenus (strain DSM 25203 / XCL-2) (Thiomicrospira crunogena), this protein is Carboxysome shell protein CsoS1C.